Consider the following 273-residue polypeptide: Inactive endochitinase At2g43600 (273 aa).

The N-terminal stretch at methionine 1–serine 22 is a signal peptide. The Chitin-binding type-1 domain maps to glutamine 23–isoleucine 61. Disulfide bonds link cysteine 25/cysteine 37, cysteine 30/cysteine 43, cysteine 36/cysteine 50, and cysteine 54/cysteine 59. The interval glycine 78–cysteine 273 is catalytic. N-linked (GlcNAc...) asparagine glycosylation occurs at asparagine 99.

The protein belongs to the glycosyl hydrolase 19 family. Chitinase class I subfamily.

The chain is Inactive endochitinase At2g43600 from Arabidopsis thaliana (Mouse-ear cress).